A 362-amino-acid polypeptide reads, in one-letter code: Nuclear hormone receptor family member nhr-77 (362 aa).

A DNA-binding region (nuclear receptor) is located at residues 8–82 (DPICPVCEFP…AGMKRNLVKQ (75 aa)). 2 consecutive NR C4-type zinc fingers follow at residues 11–32 (CPVC…CGAC) and 48–69 (CEKN…FDYC). The NR LBD domain maps to 145–362 (EAEKDVSKIL…KLYIQLGLPF (218 aa)).

Belongs to the nuclear hormone receptor family.

It is found in the nucleus. In terms of biological role, orphan nuclear receptor. In Caenorhabditis elegans, this protein is Nuclear hormone receptor family member nhr-77 (nhr-77).